We begin with the raw amino-acid sequence, 719 residues long: DNA ligase (719 aa).

Residues 42–46 (DAAYD), 92–93 (SL), and glutamate 126 each bind NAD(+). Catalysis depends on lysine 128, which acts as the N6-AMP-lysine intermediate. Arginine 149, glutamate 185, lysine 301, and lysine 325 together coordinate NAD(+). The Zn(2+) site is built by cysteine 430, cysteine 433, cysteine 448, and cysteine 454. The 80-residue stretch at 640–719 (ATGSPVEGKT…DDWFKLVGED (80 aa)) folds into the BRCT domain.

It belongs to the NAD-dependent DNA ligase family. LigA subfamily. The cofactor is Mg(2+). It depends on Mn(2+) as a cofactor.

The catalysed reaction is NAD(+) + (deoxyribonucleotide)n-3'-hydroxyl + 5'-phospho-(deoxyribonucleotide)m = (deoxyribonucleotide)n+m + AMP + beta-nicotinamide D-nucleotide.. Functionally, DNA ligase that catalyzes the formation of phosphodiester linkages between 5'-phosphoryl and 3'-hydroxyl groups in double-stranded DNA using NAD as a coenzyme and as the energy source for the reaction. It is essential for DNA replication and repair of damaged DNA. The chain is DNA ligase from Brucella suis biovar 1 (strain 1330).